The chain runs to 319 residues: Acetyl-coenzyme A carboxylase carboxyl transferase subunit alpha (319 aa).

A CoA carboxyltransferase C-terminal domain is found at 35 to 296 (DLDKEIEQLE…KATLLRQLAE (262 aa)).

It belongs to the AccA family. Acetyl-CoA carboxylase is a heterohexamer composed of biotin carboxyl carrier protein (AccB), biotin carboxylase (AccC) and two subunits each of ACCase subunit alpha (AccA) and ACCase subunit beta (AccD).

The protein resides in the cytoplasm. The catalysed reaction is N(6)-carboxybiotinyl-L-lysyl-[protein] + acetyl-CoA = N(6)-biotinyl-L-lysyl-[protein] + malonyl-CoA. It functions in the pathway lipid metabolism; malonyl-CoA biosynthesis; malonyl-CoA from acetyl-CoA: step 1/1. Functionally, component of the acetyl coenzyme A carboxylase (ACC) complex. First, biotin carboxylase catalyzes the carboxylation of biotin on its carrier protein (BCCP) and then the CO(2) group is transferred by the carboxyltransferase to acetyl-CoA to form malonyl-CoA. In Vibrio vulnificus (strain CMCP6), this protein is Acetyl-coenzyme A carboxylase carboxyl transferase subunit alpha.